The sequence spans 807 residues: Probable phosphoketolase (807 aa).

This sequence belongs to the XFP family. Thiamine diphosphate is required as a cofactor.

This Nitrosospira multiformis (strain ATCC 25196 / NCIMB 11849 / C 71) protein is Probable phosphoketolase.